A 376-amino-acid chain; its full sequence is Alkanesulfonate monooxygenase (376 aa).

The protein belongs to the SsuD family.

The catalysed reaction is an alkanesulfonate + FMNH2 + O2 = an aldehyde + FMN + sulfite + H2O + 2 H(+). In terms of biological role, catalyzes the desulfonation of aliphatic sulfonates. This Bacillus licheniformis (strain ATCC 14580 / DSM 13 / JCM 2505 / CCUG 7422 / NBRC 12200 / NCIMB 9375 / NCTC 10341 / NRRL NRS-1264 / Gibson 46) protein is Alkanesulfonate monooxygenase.